A 515-amino-acid polypeptide reads, in one-letter code: Histidine ammonia-lyase (515 aa).

Residues 145–147 (ASG) constitute a cross-link (5-imidazolinone (Ala-Gly)). Ser-146 bears the 2,3-didehydroalanine (Ser) mark.

It belongs to the PAL/histidase family. In terms of processing, contains an active site 4-methylidene-imidazol-5-one (MIO), which is formed autocatalytically by cyclization and dehydration of residues Ala-Ser-Gly.

The protein resides in the cytoplasm. The enzyme catalyses L-histidine = trans-urocanate + NH4(+). The protein operates within amino-acid degradation; L-histidine degradation into L-glutamate; N-formimidoyl-L-glutamate from L-histidine: step 1/3. This chain is Histidine ammonia-lyase, found in Gluconacetobacter diazotrophicus (strain ATCC 49037 / DSM 5601 / CCUG 37298 / CIP 103539 / LMG 7603 / PAl5).